The primary structure comprises 338 residues: 4-hydroxythreonine-4-phosphate dehydrogenase (338 aa).

H139 and T140 together coordinate substrate. H169, H214, and H270 together coordinate a divalent metal cation. Positions 278, 287, and 296 each coordinate substrate.

The protein belongs to the PdxA family. As to quaternary structure, homodimer. Zn(2+) serves as cofactor. The cofactor is Mg(2+). It depends on Co(2+) as a cofactor.

The protein localises to the cytoplasm. The enzyme catalyses 4-(phosphooxy)-L-threonine + NAD(+) = 3-amino-2-oxopropyl phosphate + CO2 + NADH. It participates in cofactor biosynthesis; pyridoxine 5'-phosphate biosynthesis; pyridoxine 5'-phosphate from D-erythrose 4-phosphate: step 4/5. Functionally, catalyzes the NAD(P)-dependent oxidation of 4-(phosphooxy)-L-threonine (HTP) into 2-amino-3-oxo-4-(phosphooxy)butyric acid which spontaneously decarboxylates to form 3-amino-2-oxopropyl phosphate (AHAP). The sequence is that of 4-hydroxythreonine-4-phosphate dehydrogenase from Desulfosudis oleivorans (strain DSM 6200 / JCM 39069 / Hxd3) (Desulfococcus oleovorans).